The following is a 124-amino-acid chain: Protein MGF 110-4L (124 aa).

Positions Met-1–Cys-28 are cleaved as a signal peptide. Asn-64 carries N-linked (GlcNAc...) asparagine; by host glycosylation. The Prevents secretion from ER signature appears at Lys-121 to Leu-124.

It belongs to the asfivirus MGF 110 family.

The protein localises to the virion. The protein resides in the host endoplasmic reticulum-Golgi intermediate compartment. Functionally, causes the redistribution of lumenal ER protein to an enlarged ERGIC compartment. This chain is Protein MGF 110-4L, found in Ornithodoros (relapsing fever ticks).